A 314-amino-acid polypeptide reads, in one-letter code: Cyclic di-GMP binding protein TDE_0214 (314 aa).

Residues Gln-146–Gly-234 form the PilZ domain. Residues Thr-288 to Pro-300 show a composition bias toward polar residues. A disordered region spans residues Thr-288 to Ser-314.

Functionally, cyclic-di-GMP binding protein that plays important roles in motility, chemotaxis, biofilm formation and virulence. The polypeptide is Cyclic di-GMP binding protein TDE_0214 (Treponema denticola (strain ATCC 35405 / DSM 14222 / CIP 103919 / JCM 8153 / KCTC 15104)).